Reading from the N-terminus, the 542-residue chain is 4-coumarate--CoA ligase-like 1 (542 aa).

Ser-189, Ser-190, Gly-191, Thr-192, Thr-193, and Lys-197 together coordinate ATP. Residue Tyr-237 participates in (E)-4-coumaroyl-AMP binding. Arg-258 is a binding site for CoA. Residues 260–331 (DLRIFLNALI…AKFPNVQVQE (72 aa)) are SBD1. The (E)-4-coumaroyl-AMP site is built by Ala-309, Glu-331, Ala-332, and Thr-336. Positions 331, 332, 336, 420, and 435 each coordinate ATP. The segment at 332–399 (AYGLTEHSCI…VRSQCVMQGY (68 aa)) is SBD2. The (E)-4-coumaroyl-AMP site is built by Lys-437 and Lys-441. CoA-binding residues include Lys-443 and Gly-444. Position 526 (Lys-526) interacts with ATP.

It belongs to the ATP-dependent AMP-binding enzyme family. In terms of assembly, interacts with TKPR1, PKSA and PKSB. Requires Mg(2+) as cofactor. As to expression, mostly confined to anther tapetal cells.

Its subcellular location is the endoplasmic reticulum. The enzyme catalyses (E)-4-coumarate + ATP + CoA = (E)-4-coumaroyl-CoA + AMP + diphosphate. It catalyses the reaction (E)-4-coumarate + ATP + H(+) = (E)-4-coumaroyl-AMP + diphosphate. It carries out the reaction (E)-4-coumaroyl-AMP + CoA = (E)-4-coumaroyl-CoA + AMP + H(+). In terms of biological role, carboxylate--CoA ligase that may use 4-coumarate as substrate. Follows a two-step reaction mechanism, wherein the carboxylate substrate first undergoes adenylation by ATP, followed by a thioesterification in the presence of CoA to yield the final CoA thioester. This is 4-coumarate--CoA ligase-like 1 from Arabidopsis thaliana (Mouse-ear cress).